A 380-amino-acid chain; its full sequence is Cytochrome b (380 aa).

Helical transmembrane passes span 34 to 54, 78 to 99, 114 to 134, and 179 to 199; these read FGSL…LLAM, WLIR…YLHI, WNTG…GYVL, and FFAL…IHLT. The heme b site is built by histidine 84 and histidine 98. Residues histidine 183 and histidine 197 each contribute to the heme b site. Histidine 202 lines the a ubiquinone pocket. Helical transmembrane passes span 227 to 247, 289 to 309, 321 to 341, and 348 to 368; these read LKDI…ALFS, LGGV…PFLH, ISQL…WVGS, and FIII…ILFP.

It belongs to the cytochrome b family. As to quaternary structure, the cytochrome bc1 complex contains 11 subunits: 3 respiratory subunits (MT-CYB, CYC1 and UQCRFS1), 2 core proteins (UQCRC1 and UQCRC2) and 6 low-molecular weight proteins (UQCRH/QCR6, UQCRB/QCR7, UQCRQ/QCR8, UQCR10/QCR9, UQCR11/QCR10 and a cleavage product of UQCRFS1). This cytochrome bc1 complex then forms a dimer. The cofactor is heme b.

The protein localises to the mitochondrion inner membrane. In terms of biological role, component of the ubiquinol-cytochrome c reductase complex (complex III or cytochrome b-c1 complex) that is part of the mitochondrial respiratory chain. The b-c1 complex mediates electron transfer from ubiquinol to cytochrome c. Contributes to the generation of a proton gradient across the mitochondrial membrane that is then used for ATP synthesis. The protein is Cytochrome b (MT-CYB) of Puffinus opisthomelas (Black-vented shearwater).